The chain runs to 95 residues: Signal recognition particle 19 kDa protein (95 aa).

The protein belongs to the SRP19 family. As to quaternary structure, part of the signal recognition particle protein translocation system, which is composed of SRP and FtsY. Archaeal SRP consists of a 7S RNA molecule of 300 nucleotides and two protein subunits: SRP54 and SRP19.

The protein resides in the cytoplasm. Its function is as follows. Involved in targeting and insertion of nascent membrane proteins into the cytoplasmic membrane. Binds directly to 7S RNA and mediates binding of the 54 kDa subunit of the SRP. This is Signal recognition particle 19 kDa protein from Desulfurococcus amylolyticus (strain DSM 18924 / JCM 16383 / VKM B-2413 / 1221n) (Desulfurococcus kamchatkensis).